The primary structure comprises 343 residues: NADH-ubiquinone oxidoreductase chain 2 (343 aa).

8 helical membrane-spanning segments follow: residues 1 to 21 (MNPMSWLIITTSIALSTTMIT), 59 to 81 (YYLIQTMASTSMLFAATTNALNT), 96 to 116 (TIITLALMMKMAAAPFHSWLP), 150 to 170 (NITLILLSAMLSITMGGLGSL), 178 to 198 (LMAFSSIAHTGWIMATITMAP), 200 to 220 (ISTLTFTIYIMTTIPTFLLIN), 241 to 261 (MTILSMTILSMGGLPPLSGFM), and 270 to 290 (LISMNMITEATLMAMASLLSL).

The protein belongs to the complex I subunit 2 family.

The protein resides in the mitochondrion inner membrane. It catalyses the reaction a ubiquinone + NADH + 5 H(+)(in) = a ubiquinol + NAD(+) + 4 H(+)(out). Core subunit of the mitochondrial membrane respiratory chain NADH dehydrogenase (Complex I) that is believed to belong to the minimal assembly required for catalysis. Complex I functions in the transfer of electrons from NADH to the respiratory chain. The immediate electron acceptor for the enzyme is believed to be ubiquinone. The protein is NADH-ubiquinone oxidoreductase chain 2 (MT-ND2) of Lycodon semicarinatus (Ryukyu odd-tooth snake).